A 148-amino-acid chain; its full sequence is MKIILTVLAGVGLLSAGGCGMLDQVNDGLNYTSEAAGYVEKVKTFAEEAPELAEKAVNDTEAKEKLEAQLESIQKAAADFNELTPPDAAAEIHRTIQEHNETLQKSAEDVLKQAEEGKVSLKELEQSDLVQNAKQITDVMGQIEKLGE.

The signal sequence occupies residues 1–18; that stretch reads MKIILTVLAGVGLLSAGG. C19 carries N-palmitoyl cysteine lipidation. C19 is lipidated: S-diacylglycerol cysteine.

It is found in the cell membrane. This is an uncharacterized protein from Bacillus subtilis (strain 168).